A 194-amino-acid polypeptide reads, in one-letter code: dTTP/UTP pyrophosphatase (194 aa).

The active-site Proton acceptor is the Asp-73.

The protein belongs to the Maf family. YhdE subfamily. A divalent metal cation serves as cofactor.

It is found in the cytoplasm. The enzyme catalyses dTTP + H2O = dTMP + diphosphate + H(+). The catalysed reaction is UTP + H2O = UMP + diphosphate + H(+). Functionally, nucleoside triphosphate pyrophosphatase that hydrolyzes dTTP and UTP. May have a dual role in cell division arrest and in preventing the incorporation of modified nucleotides into cellular nucleic acids. This chain is dTTP/UTP pyrophosphatase, found in Clostridium botulinum (strain Kyoto / Type A2).